The primary structure comprises 521 residues: Ribonuclease Y (521 aa).

The helical transmembrane segment at 1-21 threads the bilayer; the sequence is MFFIEHPFVYLGLDLIVGCLI. Positions 211-271 constitute a KH domain; the sequence is TVSMVPLPSD…VRREVARLAL (61 aa). Residues 337–430 enclose the HD domain; sequence VLQHSLEVAF…VQAADALSGA (94 aa).

It belongs to the RNase Y family.

It is found in the cell membrane. Endoribonuclease that initiates mRNA decay. The sequence is that of Ribonuclease Y from Desulfotalea psychrophila (strain LSv54 / DSM 12343).